The primary structure comprises 137 residues: 6,7-dimethyl-8-ribityllumazine synthase (137 aa).

Residues phenylalanine 11, serine 43 to aspartate 45, and cysteine 67 to isoleucine 69 each bind 5-amino-6-(D-ribitylamino)uracil. (2S)-2-hydroxy-3-oxobutyl phosphate is bound at residue aspartate 72 to threonine 73. The Proton donor role is filled by histidine 75. A 5-amino-6-(D-ribitylamino)uracil-binding site is contributed by leucine 100. Residue arginine 115 coordinates (2S)-2-hydroxy-3-oxobutyl phosphate.

It belongs to the DMRL synthase family. In terms of assembly, forms an icosahedral capsid composed of 60 subunits, arranged as a dodecamer of pentamers.

It catalyses the reaction (2S)-2-hydroxy-3-oxobutyl phosphate + 5-amino-6-(D-ribitylamino)uracil = 6,7-dimethyl-8-(1-D-ribityl)lumazine + phosphate + 2 H2O + H(+). Its pathway is cofactor biosynthesis; riboflavin biosynthesis; riboflavin from 2-hydroxy-3-oxobutyl phosphate and 5-amino-6-(D-ribitylamino)uracil: step 1/2. Functionally, catalyzes the formation of 6,7-dimethyl-8-ribityllumazine by condensation of 5-amino-6-(D-ribitylamino)uracil with 3,4-dihydroxy-2-butanone 4-phosphate. This is the penultimate step in the biosynthesis of riboflavin. The sequence is that of 6,7-dimethyl-8-ribityllumazine synthase from Methanococcus maripaludis (strain C6 / ATCC BAA-1332).